The primary structure comprises 214 residues: Type IV major pilin protein PilE1 (214 aa).

Residues 1-7 constitute a propeptide, leader sequence; sequence MNTLQKG. Phenylalanine 8 carries the post-translational modification N-methylphenylalanine. Residues 8–28 form a helical membrane-spanning segment; the sequence is FTLIELMIVIAIVGILAAVAL. Cysteine 127 and cysteine 161 are oxidised to a cystine. Positions 182–214 are disordered; sequence AGTDAVTADTTGKDKEIDTKHLPSTCRDKSSAE. Positions 192-214 are enriched in basic and acidic residues; it reads TGKDKEIDTKHLPSTCRDKSSAE.

The protein belongs to the N-Me-Phe pilin family. As to quaternary structure, the pili are polar flexible filaments of about 5.4 nanometers diameter and 2.5 micrometers average length; they consist of only a single polypeptide chain arranged in a helical configuration of five subunits per turn in the assembled pilus.

It is found in the fimbrium. The protein localises to the membrane. Its function is as follows. Major component of the type IV pilus (T4P) that plays a role in cellular adherence, microcolony formation, resistance to neutrophil mediated killing, twitching motility as well as transformation. Mediates the attachment and the formation of bacterial microcolonies on host epithelial cells. Mechanistically, pili retractation induces host NF-kappa-B activation in infected cells, which is temporally associated with the formation of gonococcal microcolonies. This chain is Type IV major pilin protein PilE1 (pilE1), found in Neisseria gonorrhoeae.